Consider the following 362-residue polypeptide: Putative HLA class I histocompatibility antigen, alpha chain H (362 aa).

A signal peptide spans 1–24 (MVLMAPRTLLLLLSGALALTQTWA). An alpha-1 region spans residues 25 to 114 (RSHSMRYFYT…ALRYYNQSEG (90 aa)). At 25-308 (RSHSMRYFYT…EPSSQPTVPI (284 aa)) the chain is on the extracellular side. Asn110 carries N-linked (GlcNAc...) asparagine glycosylation. An alpha-2 region spans residues 115–206 (GSHTMQVMYG…ENGKETLQRA (92 aa)). Positions 207-298 (DPPKTHMTHH…GLPEPLTLRW (92 aa)) are alpha-3. An Ig-like C1-type domain is found at 209 to 297 (PKTHMTHHPI…EGLPEPLTLR (89 aa)). A disulfide bond links Cys227 and Cys283. The segment at 299–308 (EPSSQPTVPI) is connecting peptide. Residues 309–332 (VGIVAGLVLLVAVVTGAVVAAVMW) form a helical membrane-spanning segment. The Cytoplasmic segment spans residues 333–362 (RKKSSDRKGGSYSQAASSNSAQGSDVSLTA). Positions 337–362 (SDRKGGSYSQAASSNSAQGSDVSLTA) are disordered. Low complexity predominate over residues 342-356 (GSYSQAASSNSAQGS).

This sequence belongs to the MHC class I family. Heterodimer of an alpha chain and a beta chain (beta-2-microglobulin).

The protein localises to the cell membrane. Involved in the presentation of foreign antigens to the immune system. The protein is Putative HLA class I histocompatibility antigen, alpha chain H (HLA-H) of Homo sapiens (Human).